The chain runs to 331 residues: Biotin synthase (331 aa).

Positions 52 to 281 (FFQNKVKLNM…TKEIRVSGGR (230 aa)) constitute a Radical SAM core domain. [4Fe-4S] cluster contacts are provided by Cys-70, Cys-74, and Cys-77. Residues Cys-114, Cys-146, Cys-206, and Arg-276 each contribute to the [2Fe-2S] cluster site.

It belongs to the radical SAM superfamily. Biotin synthase family. As to quaternary structure, homodimer. The cofactor is [4Fe-4S] cluster. [2Fe-2S] cluster is required as a cofactor.

The catalysed reaction is (4R,5S)-dethiobiotin + (sulfur carrier)-SH + 2 reduced [2Fe-2S]-[ferredoxin] + 2 S-adenosyl-L-methionine = (sulfur carrier)-H + biotin + 2 5'-deoxyadenosine + 2 L-methionine + 2 oxidized [2Fe-2S]-[ferredoxin]. It participates in cofactor biosynthesis; biotin biosynthesis; biotin from 7,8-diaminononanoate: step 2/2. In terms of biological role, catalyzes the conversion of dethiobiotin (DTB) to biotin by the insertion of a sulfur atom into dethiobiotin via a radical-based mechanism. The chain is Biotin synthase from Bacillus pumilus (strain SAFR-032).